A 535-amino-acid chain; its full sequence is ATP-dependent RNA helicase DBP3 (535 aa).

The segment covering 1–21 (MGSSSKSEKRKYDDGEELLER) has biased composition (basic and acidic residues). The tract at residues 1–96 (MGSSSKSEKR…TSYGYVQSSK (96 aa)) is disordered. Residues 35-54 (KKDKKEKKDKKEKKDKKEKK) show a composition bias toward basic residues. Basic and acidic residues predominate over residues 55-72 (DKKEKNKESKEAEARDDS). The segment covering 79–88 (SSSSSTESTS) has biased composition (low complexity). The Q motif motif lies at 128–154 (LSFDQIKLQKDVSSKLTKFPKPTPIQS). Positions 157-329 (WPFLLDGKDV…NNFMNQPVKV (173 aa)) constitute a Helicase ATP-binding domain. An ATP-binding site is contributed by 170 to 177 (AETGSGKT). The short motif at 276–279 (DEAD) is the DEAD box element. One can recognise a Helicase C-terminal domain in the interval 362-508 (NLLQKYQNTG…PVPEALLKYG (147 aa)).

The protein belongs to the DEAD box helicase family. DDX5/DBP2 subfamily.

It localises to the nucleus. The protein resides in the nucleolus. The catalysed reaction is ATP + H2O = ADP + phosphate + H(+). ATP-dependent RNA helicase required for 60S ribosomal subunit synthesis. Involved in efficient pre-rRNA processing, predominantly at site A3, which is necessary for the normal formation of 25S and 5.8S rRNAs. The polypeptide is ATP-dependent RNA helicase DBP3 (DBP3) (Lodderomyces elongisporus (strain ATCC 11503 / CBS 2605 / JCM 1781 / NBRC 1676 / NRRL YB-4239) (Yeast)).